A 231-amino-acid chain; its full sequence is 7-cyano-7-deazaguanine synthase (231 aa).

8 to 18 (FSGGQDSTTCL) contributes to the ATP binding site. Zn(2+) contacts are provided by cysteine 187, cysteine 196, cysteine 199, and cysteine 202.

The protein belongs to the QueC family. Zn(2+) is required as a cofactor.

It catalyses the reaction 7-carboxy-7-deazaguanine + NH4(+) + ATP = 7-cyano-7-deazaguanine + ADP + phosphate + H2O + H(+). It participates in purine metabolism; 7-cyano-7-deazaguanine biosynthesis. Catalyzes the ATP-dependent conversion of 7-carboxy-7-deazaguanine (CDG) to 7-cyano-7-deazaguanine (preQ(0)). This is 7-cyano-7-deazaguanine synthase from Vibrio vulnificus (strain CMCP6).